We begin with the raw amino-acid sequence, 75 residues long: Theromacin (75 aa).

Cystine bridges form between cysteine 2-cysteine 9, cysteine 24-cysteine 28, cysteine 31-cysteine 73, cysteine 39-cysteine 47, and cysteine 57-cysteine 59.

It belongs to the macin family.

It localises to the secreted. In terms of biological role, has a bactericial activity. This is Theromacin from Hirudo medicinalis (Medicinal leech).